Consider the following 463-residue polypeptide: A-type ATP synthase subunit B (463 aa).

The protein belongs to the ATPase alpha/beta chains family. In terms of assembly, has multiple subunits with at least A(3), B(3), C, D, E, F, H, I and proteolipid K(x).

The protein resides in the cell membrane. Its function is as follows. Component of the A-type ATP synthase that produces ATP from ADP in the presence of a proton gradient across the membrane. The B chain is a regulatory subunit. This is A-type ATP synthase subunit B from Thermococcus sp. (strain KI).